We begin with the raw amino-acid sequence, 492 residues long: Catalase-3 (492 aa).

Active-site residues include histidine 65 and asparagine 138. Tyrosine 348 is a heme binding site.

It belongs to the catalase family. In terms of assembly, homotetramer. Heme serves as cofactor.

The protein resides in the peroxisome. It localises to the glyoxysome. It carries out the reaction 2 H2O2 = O2 + 2 H2O. In terms of biological role, occurs in almost all aerobically respiring organisms and serves to protect cells from the toxic effects of hydrogen peroxide. The sequence is that of Catalase-3 (CAT3) from Glycine max (Soybean).